The sequence spans 165 residues: 6,7-dimethyl-8-ribityllumazine synthase 2 (165 aa).

5-amino-6-(D-ribitylamino)uracil is bound by residues Trp-24, 56-58 (SFE), and 80-82 (LVV). Residue Arg-88 is the Proton donor of the active site. Position 113 (Ser-113) interacts with 5-amino-6-(D-ribitylamino)uracil. His-127 is a binding site for (2S)-2-hydroxy-3-oxobutyl phosphate.

The protein belongs to the DMRL synthase family.

The catalysed reaction is (2S)-2-hydroxy-3-oxobutyl phosphate + 5-amino-6-(D-ribitylamino)uracil = 6,7-dimethyl-8-(1-D-ribityl)lumazine + phosphate + 2 H2O + H(+). The protein operates within cofactor biosynthesis; riboflavin biosynthesis; riboflavin from 2-hydroxy-3-oxobutyl phosphate and 5-amino-6-(D-ribitylamino)uracil: step 1/2. Its function is as follows. Catalyzes the formation of 6,7-dimethyl-8-ribityllumazine by condensation of 5-amino-6-(D-ribitylamino)uracil with 3,4-dihydroxy-2-butanone 4-phosphate. This is the penultimate step in the biosynthesis of riboflavin. This Bradyrhizobium diazoefficiens (strain JCM 10833 / BCRC 13528 / IAM 13628 / NBRC 14792 / USDA 110) protein is 6,7-dimethyl-8-ribityllumazine synthase 2.